The chain runs to 670 residues: Protein-glutamine gamma-glutamyltransferase 4 (670 aa).

2 N-linked (GlcNAc...) asparagine glycosylation sites follow: Asn151 and Asn219. Cys255 is a catalytic residue. An N-linked (GlcNAc...) asparagine glycan is attached at Asn288. Residues His314 and Asp337 contribute to the active site. Positions 377, 379, 429, and 434 each coordinate Ca(2+). N-linked (GlcNAc...) asparagine glycans are attached at residues Asn456 and Asn491.

The protein belongs to the transglutaminase superfamily. Transglutaminase family. As to quaternary structure, homodimer. It depends on Ca(2+) as a cofactor. Expressed in the coagulating gland and in the dorsal part of the prostate. Not expressed in the brain, heart, kidney, liver, lung, muscle, pancreas, spleen, stomach, testis and thymus.

It is found in the secreted. It carries out the reaction L-glutaminyl-[protein] + L-lysyl-[protein] = [protein]-L-lysyl-N(6)-5-L-glutamyl-[protein] + NH4(+). In terms of biological role, associated with the mammalian reproductive process. Plays an important role in the formation of the seminal coagulum through the cross-linking of specific proteins present in the seminal plasma. Transglutaminase is also required to stabilize the copulatory plug. This is Protein-glutamine gamma-glutamyltransferase 4 from Mus musculus (Mouse).